The primary structure comprises 700 residues: Pyrroloquinoline quinone transporter (700 aa).

The signal sequence occupies residues 1–23 (MKIFSVRQTVLPALLVLSPVVFA). In terms of domain architecture, TBDR plug spans 39 to 157 (SELDTPAAVS…SGGVMNVTTQ (119 aa)). 24 beta stranded membrane passes run 132 to 136 (NVEVL), 150 to 160 (GVMNVTTQTGQ), 162 to 171 (PPTIEASSYY), 177 to 186 (WRYGLKATGA), 195 to 204 (DVDYTVSTTR), 220 to 227 (LANAKLGV), 233 to 241 (SKLSLIFNS), 280 to 288 (QAGLRYERS), 295 to 301 (MSVMMYA), 335 to 344 (GIDSRWTHRG), 350 to 358 (VTFTTGLNY), 398 to 405 (DPYLQTQW), 411 to 419 (LSLDAGVRY), 447 to 456 (WLPAGSLKYA), 464 to 468 (YLAAG), 500 to 509 (TIEIGSKTRI), 511 to 520 (DGLLSLALFQ), 549 to 556 (GAELAWDQ), 563 to 570 (RVNASWTW), 597 to 604 (MGFASIGY), 611 to 617 (YAGTEAR), 637 to 647 (LVGLFTGYKYN), 651 to 659 (LTVDLFGRV), and 689 to 697 (YGVGMNIAW). Residues 162-697 (PPTIEASSYY…NYGVGMNIAW (536 aa)) enclose the TBDR beta-barrel domain. The TonB C-terminal box motif lies at 680–700 (YYEPSPGRNYGVGMNIAWRFE).

The protein belongs to the TonB-dependent receptor family.

Its subcellular location is the cell outer membrane. Mediates the TonB-dependent high affinity transport across the outer membrane of pyrroloquinoline quinone (PQQ), a redox cofactor required for the activity of Gcd and Asd dehydrogenases. The uptake process is energised via the TonB-ExbBD complex. Not involved in the transport of an iron-containing substrate under laboratory conditions. The protein is Pyrroloquinoline quinone transporter of Escherichia coli (strain K12).